A 161-amino-acid polypeptide reads, in one-letter code: Nucleotide-binding protein Bmul_0741/BMULJ_02519 (161 aa).

The protein belongs to the YajQ family.

In terms of biological role, nucleotide-binding protein. The polypeptide is Nucleotide-binding protein Bmul_0741/BMULJ_02519 (Burkholderia multivorans (strain ATCC 17616 / 249)).